Here is a 598-residue protein sequence, read N- to C-terminus: MSDNQSWNSSGSEEDPETESGPPVERCGVLSKWTNYIHGWQDRWVVLKNNTLSYYKSEDETEYGCRGSICLSKAVITPHDFDECRFDISVNDSVWYLRAQDPDHRQQWIDAIEQHKTESGYGSESSLRRHGSMVSLVSGASGYSATSTSSFKKGHSLREKLAEMETFRDILCRQVDTLQKYFDVCADAVSKDELQRDKVVEDDEDDFPTTRSDGDFLHNTNGNKEKLFPHVTPKGINGIDFKGEAITFKATTAGILATLSHCIELMVKREESWQKRHDKEMEKRRRLEEAYKNAMAELKKKPRFGGPDYEEGPNSLINEEEFFDAVEAALDRQDKIEEQSQSEKVRLHWPTPLPSGDAFSSVGTHRFVQKVEEMVQNHMTYSLQDVGGDANWQLVVEEGEMKVYRREVEENGIVLDPLKATHAVKGVTGHEVCNYFWSVDVRNDWETTIENFHVVETLADNAIIIYQTHKRVWPASQRDVLYLSAIRKIPALTENDPETWIVCNFSVDHDSAPLNNRCVRAKINVAMICQTLVSPPEGNQEISRDNILCKITYVANVNPGGWAPASVLRAVAKREYPKFLKRFTSYVQEKTAGKPILF.

Polar residues predominate over residues 1–11 (MSDNQSWNSSG). The tract at residues 1–24 (MSDNQSWNSSGSEEDPETESGPPV) is disordered. In terms of domain architecture, PH spans 23 to 117 (PVERCGVLSK…WIDAIEQHKT (95 aa)). Residue S126 is modified to Phosphoserine. Residue S132 is modified to Phosphoserine; by PKD. Phosphoserine is present on S135. Residues 202 to 221 (DDEDDFPTTRSDGDFLHNTN) are disordered. Residues 268-301 (KREESWQKRHDKEMEKRRRLEEAYKNAMAELKKK) are a coiled coil. Position 315 is a phosphoserine (S315). An FFAT motif is present at residues 321 to 327 (EFFDAVE). The START domain maps to 363 to 592 (GTHRFVQKVE…FTSYVQEKTA (230 aa)). Positions 446, 467, 504, and 553 each coordinate an N-acylsphing-4-enine.

Interacts with VAPA and VAPB. Interaction with VAPB is less efficient than with VAPA. Interacts (via FFAT motif) with the MOSPD2 (via MSP domain). Phosphorylation on Ser-132 decreases the affinity toward phosphatidylinositol 4-phosphate at Golgi membranes and reduces ceramide transfer activity. Inactivated by hyperphosphorylation of serine residues by CSNK1G2/CK1 that triggers dissociation from the Golgi complex, thus down-regulating ER-to-Golgi transport of ceramide and sphingomyelin synthesis.

The protein localises to the cytoplasm. It localises to the golgi apparatus. Its subcellular location is the endoplasmic reticulum. The enzyme catalyses N-hexadecanoylsphing-4-enine(in) = N-hexadecanoylsphing-4-enine(out). Shelters ceramides and diacylglycerol lipids inside its START domain and mediates the intracellular trafficking of ceramides and diacylglycerol lipids in a non-vesicular manner. This Cricetulus griseus (Chinese hamster) protein is Ceramide transfer protein (CERT1).